Consider the following 189-residue polypeptide: MKKYSKKDRQMKLQVAIEENPFITDEQLAEKFGVIVQTIRLDRVALSIPELRERIKHVASVNYADAVKSLPIDEVIGEIIDIQLSKSAISIFDVRSEHVFKRNKIARGHHLFAQANSLATAVIPNELALTTQATVRFVRSVYEGERIIAKAKVRPATDNRAITIVDVKSYVGDEIVLKGKFEMYHATQK.

This sequence belongs to the FapR family.

Its function is as follows. Transcriptional factor involved in regulation of membrane lipid biosynthesis by repressing genes involved in fatty acid and phospholipid metabolism. The polypeptide is Transcription factor FapR (Listeria innocua serovar 6a (strain ATCC BAA-680 / CLIP 11262)).